A 122-amino-acid chain; its full sequence is Crustacean hyperglycemic hormones 7 (122 aa).

The N-terminal stretch at 1–26 (MSLAMTAFRMMAVALVVVVASSTTWA) is a signal peptide. Intrachain disulfides connect Cys-55–Cys-91, Cys-71–Cys-87, and Cys-74–Cys-100. Valine amide is present on Val-120.

Belongs to the arthropod CHH/MIH/GIH/VIH hormone family. In terms of tissue distribution, produced by the medulla terminalis X-organ in the eyestalks and transported to the sinus gland where they are stored and released.

It is found in the secreted. Its function is as follows. Hormone found in the sinus gland of isopods and decapods which controls the blood sugar level. Has a secretagogue action over the amylase released from the midgut gland. May act as a stress hormone and may be involved in the control of molting and reproduction. The polypeptide is Crustacean hyperglycemic hormones 7 (Penaeus japonicus (Kuruma prawn)).